A 70-amino-acid polypeptide reads, in one-letter code: Small ribosomal subunit protein bS21 (70 aa).

This sequence belongs to the bacterial ribosomal protein bS21 family.

The sequence is that of Small ribosomal subunit protein bS21 from Helicobacter pylori (strain P12).